Here is a 1198-residue protein sequence, read N- to C-terminus: Tetratricopeptide repeat protein 17 (1198 aa).

The stretch at 295-328 (FTSYYTLGNIYAMLGEYNHSVLCYDHALQAKPGF) is one TPR 1 repeat. A coiled-coil region spans residues 340-382 (CQQKLEQKLEAQHRSLQRTLNELKEYQKQHDHYLRQQEILEKH). TPR repeat units follow at residues 619-652 (WLILNEAGLYWRAVGNSTFAIACLQRALNLAPVQ) and 689-722 (PLTFLSLGNAYLALKNVSGALEAFRQALKLSTKC). Disordered stretches follow at residues 774–793 (LDAAAEEPSGHGADEDPVLS) and 902–954 (VKKP…YQSL). Basic residues predominate over residues 902–914 (VKKPKGDHKKPPG). TPR repeat units lie at residues 1071 to 1105 (SWVLSSMAALYWRVKGQGKKAIDCLRQALHYAPHQ), 1108 to 1141 (DVPLISLANILHNAKLWNDAVIVATMAVEIAPHF), and 1142 to 1175 (AVNHFTLGNVYVAMEEFEKALVWYESTLKLQPEF).

The protein belongs to the TTC17 family. Interacts with CATIP.

It localises to the cytoplasm. The protein localises to the cell membrane. Its subcellular location is the cytoskeleton. Its function is as follows. Plays a role in primary ciliogenesis by modulating actin polymerization. This Mus musculus (Mouse) protein is Tetratricopeptide repeat protein 17 (Ttc17).